Here is a 364-residue protein sequence, read N- to C-terminus: Histidinol-phosphate aminotransferase (364 aa).

Residues M1 to P46 are disordered. Residues G17–I33 are compositionally biased toward basic and acidic residues. Position 222 is an N6-(pyridoxal phosphate)lysine (K222).

Belongs to the class-II pyridoxal-phosphate-dependent aminotransferase family. Histidinol-phosphate aminotransferase subfamily. It depends on pyridoxal 5'-phosphate as a cofactor.

It catalyses the reaction L-histidinol phosphate + 2-oxoglutarate = 3-(imidazol-4-yl)-2-oxopropyl phosphate + L-glutamate. It functions in the pathway amino-acid biosynthesis; L-histidine biosynthesis; L-histidine from 5-phospho-alpha-D-ribose 1-diphosphate: step 7/9. This is Histidinol-phosphate aminotransferase from Halorubrum lacusprofundi (strain ATCC 49239 / DSM 5036 / JCM 8891 / ACAM 34).